Here is a 96-residue protein sequence, read N- to C-terminus: Small ribosomal subunit protein bS6 (96 aa).

The protein belongs to the bacterial ribosomal protein bS6 family.

Functionally, binds together with bS18 to 16S ribosomal RNA. The sequence is that of Small ribosomal subunit protein bS6 from Salinispora tropica (strain ATCC BAA-916 / DSM 44818 / JCM 13857 / NBRC 105044 / CNB-440).